A 366-amino-acid chain; its full sequence is Probable UDP-arabinopyranose mutase 2 (366 aa).

The short motif at 104–106 is the DXD motif element; that stretch reads DDD. The N-linked (Glc...) arginine glycan is linked to arginine 152.

It belongs to the RGP family. As to quaternary structure, homopentamer or homohexamer. Mn(2+) serves as cofactor. It depends on Mg(2+) as a cofactor. In terms of processing, reversibly glycosylated by UDP-glucose, UDP-xylose and UDP-galactose, but not UDP-mannose. As to expression, expressed in all tissues tested, including root, tuber, leaf, petiole, shoot, stolon and stem.

It is found in the secreted. The protein resides in the cell wall. The protein localises to the cell junction. Its subcellular location is the plasmodesma. It localises to the golgi apparatus. The enzyme catalyses UDP-beta-L-arabinofuranose = UDP-beta-L-arabinopyranose. Probable UDP-L-arabinose mutase involved in the biosynthesis of cell wall non-cellulosic polysaccharides. Was initially shown to possess an autoglycosylating activity which is dependent on the presence of UDP-glucose and manganese. The polypeptide is Probable UDP-arabinopyranose mutase 2 (Solanum tuberosum (Potato)).